The chain runs to 576 residues: RING finger and SPRY domain-containing protein 1 (576 aa).

The N-terminal stretch at M1–G16 is a signal peptide. Phosphoserine is present on S50. A disordered region spans residues S50–N99. Polar residues predominate over residues D57–V68. The segment covering P83–K97 has biased composition (basic residues). One can recognise a B30.2/SPRY domain in the interval L300 to F483. N314 is a glycosylation site (N-linked (GlcNAc...) asparagine). An RING-type zinc finger spans residues C527–R562.

The protein localises to the secreted. The protein is RING finger and SPRY domain-containing protein 1 (RSPRY1) of Macaca fascicularis (Crab-eating macaque).